We begin with the raw amino-acid sequence, 234 residues long: MASFLKISTLIAIVSTLQTTLAAPPACLLACVAKVEKGSKCSGLNDLSCICTTKNSDVEKCLKEICPNGDADTAISAFKSSCSGYSSQSSSSESESESASSEESSASASASASSSAGKSSNVEASTTKESSSAKASSSAAGSSEAVSSATETASTEESSSAAASASASASATKESSSEAASSTSSTLKESKTSTTAAASSSESTTATGVLTQSEGSAAKVGLGALVGLVGAVLL.

A signal peptide spans Met1–Ala22. The region spanning Ala23–Ser109 is the CFEM domain. Cystine bridges form between Cys27–Cys66, Cys31–Cys61, Cys41–Cys49, and Cys51–Cys82. Asp46 serves as a coordination point for heme. A compositionally biased stretch (low complexity) spans Ser86–Thr207. A disordered region spans residues Ser86–Gly208. The GPI-anchor amidated glycine moiety is linked to residue Gly215. A propeptide spans Ser216–Leu234 (removed in mature form).

Belongs to the CCW14 family. In terms of processing, the GPI-anchor is attached to the protein in the endoplasmic reticulum and serves to target the protein to the cell surface. There, the glucosamine-inositol phospholipid moiety is cleaved off and the GPI-modified mannoprotein is covalently attached via its lipidless GPI glycan remnant to the 1,6-beta-glucan of the outer cell wall layer.

It is found in the secreted. It localises to the cell wall. Its subcellular location is the membrane. Its function is as follows. Beta-glucan associated cell wall protein involved in cell wall structure. May serve as cross-linking or coat-forming wall protein. This is Covalently-linked cell wall protein 14 (SSR1) from Candida albicans (strain SC5314 / ATCC MYA-2876) (Yeast).